The sequence spans 195 residues: Probable GTP-binding protein EngB (195 aa).

One can recognise an EngB-type G domain in the interval 24–195 (ELPEIALAGR…EAWDAILEKL (172 aa)). GTP is bound by residues 32-39 (GRSNVGKS), 59-63 (GKTQL), 77-80 (DVPG), 144-147 (TKAD), and 176-178 (FSS). 2 residues coordinate Mg(2+): Ser39 and Thr61.

Belongs to the TRAFAC class TrmE-Era-EngA-EngB-Septin-like GTPase superfamily. EngB GTPase family. Mg(2+) serves as cofactor.

In terms of biological role, necessary for normal cell division and for the maintenance of normal septation. This Streptococcus pneumoniae (strain JJA) protein is Probable GTP-binding protein EngB.